A 206-amino-acid chain; its full sequence is Large ribosomal subunit protein uL3 (206 aa).

The interval 122–154 is disordered; that stretch reads VVKRHGHAGGPGGHGSRFHRHPGSMGANSTPSR.

Belongs to the universal ribosomal protein uL3 family. In terms of assembly, part of the 50S ribosomal subunit. Forms a cluster with proteins L14 and L19.

In terms of biological role, one of the primary rRNA binding proteins, it binds directly near the 3'-end of the 23S rRNA, where it nucleates assembly of the 50S subunit. In Leptospira borgpetersenii serovar Hardjo-bovis (strain JB197), this protein is Large ribosomal subunit protein uL3.